The primary structure comprises 138 residues: MFTDQQKIGAMLSAMGLFFGFLGVLLFLDRNLLALGNLLLVSGIVLILGLQKTTKFFAQKKKIKGTILFFFGIVVLLVTRWTFVGMVIEIFGFVNLFGDAFPIVISILRKLPIIGNILNHPLVNRLLQKADSGNELPF.

Topologically, residues 1–7 are cytoplasmic; it reads MFTDQQK. A helical transmembrane segment spans residues 8 to 28; that stretch reads IGAMLSAMGLFFGFLGVLLFL. Topologically, residues 29–30 are lumenal; it reads DR. Residues 31–51 traverse the membrane as a helical segment; it reads NLLALGNLLLVSGIVLILGLQ. Residues 52–62 are Cytoplasmic-facing; the sequence is KTTKFFAQKKK. The chain crosses the membrane as a helical span at residues 63–82; the sequence is IKGTILFFFGIVVLLVTRWT. The Lumenal portion of the chain corresponds to 83–87; it reads FVGMV. A helical transmembrane segment spans residues 88 to 108; that stretch reads IEIFGFVNLFGDAFPIVISIL. The Cytoplasmic segment spans residues 109-138; the sequence is RKLPIIGNILNHPLVNRLLQKADSGNELPF.

This sequence belongs to the GOT1 family.

Its subcellular location is the golgi apparatus membrane. Functionally, may be involved in fusion of ER-derived transport vesicles with the Golgi complex. The chain is Protein transport protein got1 homolog (golt1) from Dictyostelium discoideum (Social amoeba).